The chain runs to 429 residues: Glutamate-1-semialdehyde 2,1-aminomutase 2 (429 aa).

Lys268 bears the N6-(pyridoxal phosphate)lysine mark.

This sequence belongs to the class-III pyridoxal-phosphate-dependent aminotransferase family. HemL subfamily. In terms of assembly, homodimer. Pyridoxal 5'-phosphate serves as cofactor.

It localises to the cytoplasm. It catalyses the reaction (S)-4-amino-5-oxopentanoate = 5-aminolevulinate. It participates in porphyrin-containing compound metabolism; protoporphyrin-IX biosynthesis; 5-aminolevulinate from L-glutamyl-tRNA(Glu): step 2/2. This chain is Glutamate-1-semialdehyde 2,1-aminomutase 2, found in Bacillus anthracis (strain A0248).